The primary structure comprises 251 residues: E3 ubiquitin-protein ligase MARCHF3 (251 aa).

Residues glutamine 61–glutamate 121 form an RING-CH-type zinc finger. The Zn(2+) site is built by cysteine 69, cysteine 72, cysteine 85, cysteine 87, histidine 95, cysteine 98, cysteine 111, and cysteine 114. 2 consecutive transmembrane segments (helical) span residues leucine 143 to leucine 163 and alanine 180 to valine 200.

The protein localises to the cytoplasmic vesicle membrane. It localises to the early endosome membrane. It catalyses the reaction S-ubiquitinyl-[E2 ubiquitin-conjugating enzyme]-L-cysteine + [acceptor protein]-L-lysine = [E2 ubiquitin-conjugating enzyme]-L-cysteine + N(6)-ubiquitinyl-[acceptor protein]-L-lysine.. The protein operates within protein modification; protein ubiquitination. In terms of biological role, E3 ubiquitin-protein ligase which may be involved in endosomal trafficking. E3 ubiquitin ligases accept ubiquitin from an E2 ubiquitin-conjugating enzyme in the form of a thioester and then directly transfer the ubiquitin to targeted substrates. The protein is E3 ubiquitin-protein ligase MARCHF3 (marchf3) of Xenopus tropicalis (Western clawed frog).